Here is a 20-residue protein sequence, read N- to C-terminus: Isocitrate dehydrogenase [NADP] (20 aa).

The protein belongs to the isocitrate and isopropylmalate dehydrogenases family. Mn(2+) serves as cofactor. The cofactor is Mg(2+).

It is found in the cytoplasm. The enzyme catalyses D-threo-isocitrate + NADP(+) = 2-oxoglutarate + CO2 + NADPH. This chain is Isocitrate dehydrogenase [NADP], found in Naegleria fowleri (Brain eating amoeba).